We begin with the raw amino-acid sequence, 55 residues long: Large ribosomal subunit protein bL33 (55 aa).

This sequence belongs to the bacterial ribosomal protein bL33 family.

This Agrobacterium fabrum (strain C58 / ATCC 33970) (Agrobacterium tumefaciens (strain C58)) protein is Large ribosomal subunit protein bL33.